The following is a 215-amino-acid chain: Large ribosomal subunit protein uL3 (215 aa).

Residues 136–161 (GVSISHRSHGSTGQRQDPGKVFKGKK) form a disordered region. Gln-151 is subject to N5-methylglutamine.

Belongs to the universal ribosomal protein uL3 family. In terms of assembly, part of the 50S ribosomal subunit. Forms a cluster with proteins L14 and L19. Methylated by PrmB.

In terms of biological role, one of the primary rRNA binding proteins, it binds directly near the 3'-end of the 23S rRNA, where it nucleates assembly of the 50S subunit. This is Large ribosomal subunit protein uL3 from Rickettsia akari (strain Hartford).